Consider the following 573-residue polypeptide: Proton-coupled zinc antiporter SLC30A9, mitochondrial (573 aa).

The disordered stretch occupies residues 66-108 (NCSTSGSGKDGSPTRPEEPKTTEKAQAAQPAAKGAGSKPQGLT). Positions 90–104 (AQAAQPAAKGAGSKP) are enriched in low complexity. Transmembrane regions (helical) follow at residues 244 to 264 (VVMVAICINGLNFFFKLLAWV), 319 to 339 (GVGIFMMGAGLSWYHGIMGLL), 347 to 367 (LLWAYCILAGSLVSEGATLLV), 397 to 417 (VVLLEDAAAVLGVVLAAGCMG), and 429 to 449 (SLGSLGVGTLLGTVSAFLIYT). Residues 467–471 (LTEFL) carry the LXXLL motif motif.

It belongs to the cation diffusion facilitator (CDF) transporter (TC 2.A.4) family. SLC30A subfamily.

It localises to the mitochondrion membrane. The protein resides in the nucleus. The protein localises to the endoplasmic reticulum. It catalyses the reaction Zn(2+)(in) + 2 H(+)(out) = Zn(2+)(out) + 2 H(+)(in). Functionally, mitochondrial proton-coupled zinc ion antiporter mediating the export of zinc from the mitochondria and involved in zinc homeostasis, zinc mobilization as well as mitochondrial morphology and health. In nucleus, may function as a secondary coactivator for nuclear receptors. The protein is Proton-coupled zinc antiporter SLC30A9, mitochondrial (slc30a9) of Danio rerio (Zebrafish).